The sequence spans 415 residues: Alpha-N-acetylgalactosaminidase (415 aa).

A signal peptide spans 1 to 17 (MLQKTVLLLALVAQVLM). Cystine bridges form between Cys-38-Cys-80, Cys-42-Cys-49, and Cys-127-Cys-158. Residues 78-79 (DD) and Lys-154 contribute to the substrate site. Asp-156 functions as the Nucleophile in the catalytic mechanism. Asn-177 is a glycosylation site (N-linked (GlcNAc...) asparagine). The cysteines at positions 187 and 209 are disulfide-linked. Ser-188 contacts substrate. Asn-201 is a glycosylation site (N-linked (GlcNAc...) asparagine). Residues Arg-213 and Asp-217 each coordinate substrate. Asp-217 functions as the Proton donor in the catalytic mechanism. Ser-322 carries the phosphoserine modification. Asn-330 carries an N-linked (GlcNAc...) asparagine glycan. The residue at position 332 (Ser-332) is a Phosphoserine. Asn-385 carries N-linked (GlcNAc...) asparagine glycosylation.

This sequence belongs to the glycosyl hydrolase 27 family. Homodimer.

The protein resides in the lysosome. It catalyses the reaction Cleavage of non-reducing alpha-(1-&gt;3)-N-acetylgalactosamine residues from human blood group A and AB mucin glycoproteins, Forssman hapten and blood group A lacto series glycolipids.. It carries out the reaction a neolactoside IV(3)-alpha-GalNAc,IV(2)-alpha-Fuc-nLc4Cer(d18:1(4E)) + H2O = a neolactoside IV(2)-alpha-Fuc-nLc4Cer(d18:1(4E)) + N-acetyl-alpha-D-galactosamine. The catalysed reaction is a neolactoside IV(3)-alpha-GalNAc,IV(2)-alpha-Fuc-nLc4Cer(d18:0) + H2O = a neolactoside IV(2)-alpha-Fuc-nLc4Cer(d18:0) + N-acetyl-alpha-D-galactosamine. The enzyme catalyses a globoside IV3GalNAc-Gb4Cer + H2O = N-acetyl-alpha-D-galactosamine + a globoside Gb4Cer. Removes terminal alpha-N-acetylgalactosamine residues from glycolipids and glycopeptides. Required for the breakdown of glycolipids. In Rattus norvegicus (Rat), this protein is Alpha-N-acetylgalactosaminidase (Naga).